Reading from the N-terminus, the 161-residue chain is Putative outer membrane protein YedS (161 aa).

The N-terminal stretch at 1 to 21 (MKRKVLAMLVPALLVAGAANA) is a signal peptide.

It belongs to the Gram-negative porin family.

It is found in the cell outer membrane. This is Putative outer membrane protein YedS (yedS) from Escherichia coli (strain K12).